An 888-amino-acid chain; its full sequence is Alanine--tRNA ligase (888 aa).

The Zn(2+) site is built by H564, H568, C676, and H680.

The protein belongs to the class-II aminoacyl-tRNA synthetase family. Zn(2+) serves as cofactor.

It is found in the cytoplasm. It carries out the reaction tRNA(Ala) + L-alanine + ATP = L-alanyl-tRNA(Ala) + AMP + diphosphate. In terms of biological role, catalyzes the attachment of alanine to tRNA(Ala) in a two-step reaction: alanine is first activated by ATP to form Ala-AMP and then transferred to the acceptor end of tRNA(Ala). Also edits incorrectly charged Ser-tRNA(Ala) and Gly-tRNA(Ala) via its editing domain. This Mesorhizobium japonicum (strain LMG 29417 / CECT 9101 / MAFF 303099) (Mesorhizobium loti (strain MAFF 303099)) protein is Alanine--tRNA ligase.